We begin with the raw amino-acid sequence, 245 residues long: NAD(P)H-quinone oxidoreductase subunit K (245 aa).

[4Fe-4S] cluster contacts are provided by Cys58, Cys59, Cys123, and Cys154.

Belongs to the complex I 20 kDa subunit family. NDH-1 can be composed of about 15 different subunits; different subcomplexes with different compositions have been identified which probably have different functions. [4Fe-4S] cluster serves as cofactor.

It is found in the cellular thylakoid membrane. The catalysed reaction is a plastoquinone + NADH + (n+1) H(+)(in) = a plastoquinol + NAD(+) + n H(+)(out). It catalyses the reaction a plastoquinone + NADPH + (n+1) H(+)(in) = a plastoquinol + NADP(+) + n H(+)(out). Its function is as follows. NDH-1 shuttles electrons from an unknown electron donor, via FMN and iron-sulfur (Fe-S) centers, to quinones in the respiratory and/or the photosynthetic chain. The immediate electron acceptor for the enzyme in this species is believed to be plastoquinone. Couples the redox reaction to proton translocation, and thus conserves the redox energy in a proton gradient. Cyanobacterial NDH-1 also plays a role in inorganic carbon-concentration. The chain is NAD(P)H-quinone oxidoreductase subunit K from Nostoc sp. (strain PCC 7120 / SAG 25.82 / UTEX 2576).